The following is a 928-amino-acid chain: Arf guanine nucleotide exchange factor sec74 (928 aa).

Polar residues-rich tracts occupy residues 1–12 (MDESSRIASSSA) and 57–83 (TITS…STTD). 2 disordered regions span residues 1–152 (MDES…RPSS) and 227–249 (SLSS…EDFG). Phosphoserine is present on Ser-67. Low complexity-rich tracts occupy residues 89-102 (GHSS…KVSS) and 115-132 (SKSS…TSSS). In terms of domain architecture, SEC7 spans 228 to 420 (LSSNFSARTP…ECFYDNITYT (193 aa)). Polar residues predominate over residues 234–245 (ARTPASNQSSVS). The PH domain occupies 548–677 (KVFKLGILIQ…WLVKINFVST (130 aa)).

The protein localises to the cytoplasm. It is found in the cell tip. Functionally, guanine nucleotide exchange factor for Arf GTPases, stimulating the nucleotide exchange from the GDP-bound to the GTP-bound form. Involved in vesicular transport. This Schizosaccharomyces pombe (strain 972 / ATCC 24843) (Fission yeast) protein is Arf guanine nucleotide exchange factor sec74 (sec74).